The following is a 309-amino-acid chain: Ribosomal RNA small subunit methyltransferase H (309 aa).

S-adenosyl-L-methionine contacts are provided by residues 33–35 (GGH), Asp-53, Phe-79, Asp-100, and Gln-107.

Belongs to the methyltransferase superfamily. RsmH family.

It is found in the cytoplasm. It carries out the reaction cytidine(1402) in 16S rRNA + S-adenosyl-L-methionine = N(4)-methylcytidine(1402) in 16S rRNA + S-adenosyl-L-homocysteine + H(+). In terms of biological role, specifically methylates the N4 position of cytidine in position 1402 (C1402) of 16S rRNA. In Clostridium botulinum (strain Kyoto / Type A2), this protein is Ribosomal RNA small subunit methyltransferase H.